The following is a 260-amino-acid chain: Cytosolic Fe-S cluster assembly factor Nubp2 homolog 2 (260 aa).

An ATP-binding site is contributed by 14 to 21 (GKGGVGKS). The [4Fe-4S] cluster site is built by C188 and C191.

This sequence belongs to the Mrp/NBP35 ATP-binding proteins family. NUBP2/CFD1 subfamily. Heterotetramer of 2 Nubp1 and 2 Nubp2 chains. [4Fe-4S] cluster is required as a cofactor.

It is found in the cytoplasm. Component of the cytosolic iron-sulfur (Fe/S) protein assembly (CIA) machinery. Required for maturation of extramitochondrial Fe-S proteins. The Nubp1-Nubp2 heterotetramer forms a Fe-S scaffold complex, mediating the de novo assembly of an Fe-S cluster and its transfer to target apoproteins. The chain is Cytosolic Fe-S cluster assembly factor Nubp2 homolog 2 from Drosophila yakuba (Fruit fly).